A 332-amino-acid polypeptide reads, in one-letter code: UPF0194 membrane protein YbhG (332 aa).

The signal sequence occupies residues methionine 1 to alanine 16. Residues glutamate 108–serine 211 are a coiled coil.

Belongs to the UPF0194 family.

The protein resides in the periplasm. This Escherichia coli O6:H1 (strain CFT073 / ATCC 700928 / UPEC) protein is UPF0194 membrane protein YbhG.